A 335-amino-acid polypeptide reads, in one-letter code: Probable cytosolic iron-sulfur protein assembly protein Ciao1 (335 aa).

WD repeat units lie at residues 12–51 (GHKGRIWGVAWHPKGNVFASCGEDKAIRIWSLNGNTWTTK), 57–96 (GHKRTIREIRWSPCGQYLASASFDGTTAIWSKSSGEFECN), 101–140 (GHENEVKSVSWSRSGGLLATCSRDKSVWIWEVAGDDEFEC), 146–185 (PHTQDVKRVVWHPTKELLASASYDNTIKMFAEDALDSDWD), 192–231 (SHTSTVWSIDFDATGERLVSCSDDTSLKIWQAYHPGNDAG), 250–289 (QHSRAIYDVSWCKLTNLIATACGDDGIRIFKETSDSKRDE), and 301–335 (AHDQDVNSVEWNPVVEGQLISCSDDGTIKVWKMTE).

Belongs to the WD repeat CIA1 family.

Essential component of the cytosolic iron-sulfur (Fe/S) protein assembly machinery. Required for the maturation of extramitochondrial Fe/S proteins. In Drosophila ananassae (Fruit fly), this protein is Probable cytosolic iron-sulfur protein assembly protein Ciao1.